Reading from the N-terminus, the 532-residue chain is Pentatricopeptide repeat-containing protein At5g66500, mitochondrial (532 aa).

A mitochondrion-targeting transit peptide spans 1–33; it reads MFACLRIGRFIRLGNVTVKSTNLVLRCVFIRNF. PPR repeat units lie at residues 48-82, 83-117, 118-148, 149-183, 184-218, 223-248, 250-280, 281-314, 315-345, 346-380, 383-413, and 419-453; these read DLSS…SPDL, SSHT…GAET, GTIS…VEEK, DLVS…RVEI, SEFT…GRDL, TAMI…LNVH, DEVM…QRPN, VRVL…GFVS, DSKL…IPSK, SVVS…GSGV, NSVT…MKEK, and GTEH…DNQS. The type E motif; degenerate stretch occupies residues 458–532; that stretch reads IWVAVLSACS…VKTAGHSLFI (75 aa).

Belongs to the PPR family. PCMP-E subfamily.

It is found in the mitochondrion. The sequence is that of Pentatricopeptide repeat-containing protein At5g66500, mitochondrial (PCMP-E38) from Arabidopsis thaliana (Mouse-ear cress).